The sequence spans 441 residues: Insulinoma-associated protein 1 (441 aa).

Basic residues predominate over residues 1-12 (MPKGFLVKRSRK). The tract at residues 1–20 (MPKGFLVKRSRKSPPVSYRV) is SNAG domain. Disordered stretches follow at residues 1 to 31 (MPKGFLVKRSRKSPPVSYRVREEEEPRGESL), 43 to 189 (TGGA…KAIR), 205 to 224 (LKIKEGPVEPPRPRAASSGP), and 278 to 316 (RWHKPRPPVASTAQAKEEPLSDRDTPSPGASESGSEDGL). Positions 19–28 (RVREEEEPRG) are enriched in basic and acidic residues. Positions 74–83 (NPDTVQQALY) are enriched in polar residues. Residues 89 to 98 (VSREQRERKY) show a composition bias toward basic and acidic residues. 2 stretches are compositionally biased toward low complexity: residues 138–147 (VSSSSSVSRS) and 169–180 (GATSSSAPSKPP). The C2H2-type 1 zinc-finger motif lies at 258 to 280 (YRCPECHKVFSCPANLASHRRWH). Residues 292–302 (AKEEPLSDRDT) are compositionally biased toward basic and acidic residues. C2H2-type zinc fingers lie at residues 317 to 339 (YECPRCARKFRRQAYLRKHLLSH), 372 to 395 (HPCPVCGETFPGKSSQERHIRLLH), and 400 to 423 (YPCKYCPATFYSSPGLTRHINKCH).

Belongs to the INSM1 family.

It is found in the nucleus. May act as a transcriptional regulator. Plays a role in noradrenergic neuron, pancreatic and gastrointestinal endocrine cells differentiation during embryonic development. This is Insulinoma-associated protein 1 (insm1) from Xenopus tropicalis (Western clawed frog).